The primary structure comprises 216 residues: MOB kinase activator 3C (216 aa).

Residues Cys82, Cys87, His164, and His169 each coordinate Zn(2+).

The protein belongs to the MOB1/phocein family.

In terms of biological role, may regulate the activity of kinases. This is MOB kinase activator 3C (MOB3C) from Homo sapiens (Human).